A 316-amino-acid polypeptide reads, in one-letter code: Geminin coiled-coil domain-containing protein 1 (316 aa).

Positions 82–117 (QISANKQLQDTLLQKEEELSRLHEENNKLKEFLNSA) form a coiled coil. 2 stretches are compositionally biased toward polar residues: residues 134–155 (GQSSFCTNPNSRVPFSSNSTPG) and 207–234 (MSLQPKQDSPSSGYSSAHLTPGHSQAAT). Disordered regions lie at residues 134-160 (GQSSFCTNPNSRVPFSSNSTPGSKAKR) and 207-269 (MSLQ…DVAP). Thr-153 carries the post-translational modification Phosphothreonine; by cdk2. The span at 235–252 (SCSLSPSQCSSASLPESE) shows a compositional bias: low complexity. The segment covering 253–262 (TASPLSSPTY) has biased composition (polar residues).

Belongs to the GEMC1 family. As to quaternary structure, interacts with topbp1. Interacts with Cdc45l and the kinase cdk2-cyclin-E (the interaction is direct). Post-translationally, highly phosphorylated by cdk2; stimulates initiation of DNA replication. As to expression, expressed in most tissues. Enriched in proliferating cells from skin and gut.

Its subcellular location is the nucleus. Regulator of DNA replication. Promotes initiation of chromosomal DNA replication by mediating topbp1- and cdk2-dependent recruitment of cdc45l onto replication origins. This Xenopus laevis (African clawed frog) protein is Geminin coiled-coil domain-containing protein 1 (gmnc).